The primary structure comprises 588 residues: Pleckstrin homology domain-containing family A member 4 (588 aa).

One can recognise a PH domain in the interval 54–153 (PVHIRGWLHK…WLRALGRASR (100 aa)). Disordered stretches follow at residues 155-349 (EGED…QASM) and 495-588 (AGLG…VDHL). S164 carries the phosphoserine modification. Over residues 183–193 (VNRREEGRISE) the composition is skewed to basic and acidic residues. Residues 211-222 (TPNSTVDLQTDT) are compositionally biased toward polar residues. Composition is skewed to low complexity over residues 246 to 260 (PRPR…PLSA) and 321 to 334 (QRTQ…GSST). Residue S562 is modified to Phosphoserine.

The protein resides in the cytoplasm. It is found in the membrane. Functionally, binds specifically to phosphatidylinositol 3-phosphate (PtdIns3P), but not to other phosphoinositides. The sequence is that of Pleckstrin homology domain-containing family A member 4 (Plekha4) from Mus musculus (Mouse).